We begin with the raw amino-acid sequence, 40 residues long: Ostricacin-3 (40 aa).

Cystine bridges form between Cys-8–Cys-36, Cys-15–Cys-30, and Cys-20–Cys-37.

The protein resides in the secreted. Has antibacterial activity against the Gram-positive bacterium S.aureus 1056 MRSA (MIC=2.78 ug/ml) and the Gram-negative bacterium E.coli O157:H7 (MIC=2.41 ug/ml). Does not have antifungal activity against the yeast C.albicans 3153A. This is Ostricacin-3 from Struthio camelus (Common ostrich).